Reading from the N-terminus, the 249-residue chain is Flagellar L-ring protein (249 aa).

The first 25 residues, 1 to 25 (MSRLRTSHALRTAAALVAVGCLASG), serve as a signal peptide directing secretion. Residue Cys26 is the site of N-palmitoyl cysteine attachment. Cys26 carries S-diacylglycerol cysteine lipidation.

It belongs to the FlgH family. As to quaternary structure, the basal body constitutes a major portion of the flagellar organelle and consists of four rings (L,P,S, and M) mounted on a central rod.

The protein localises to the cell outer membrane. The protein resides in the bacterial flagellum basal body. Functionally, assembles around the rod to form the L-ring and probably protects the motor/basal body from shearing forces during rotation. This chain is Flagellar L-ring protein, found in Afipia carboxidovorans (strain ATCC 49405 / DSM 1227 / KCTC 32145 / OM5) (Oligotropha carboxidovorans).